The primary structure comprises 438 residues: tRNA-2-methylthio-N(6)-dimethylallyladenosine synthase (438 aa).

The region spanning 2–118 is the MTTase N-terminal domain; it reads KSFYLETFGC…LADMVRDAEL (117 aa). Positions 11, 47, 81, 157, 161, and 164 each coordinate [4Fe-4S] cluster. The 231-residue stretch at 143 to 373 folds into the Radical SAM core domain; sequence PSAEVSRFVT…LALQEEITRQ (231 aa). The 63-residue stretch at 376-438 folds into the TRAM domain; sequence QMDIGQVLPV…YRNSHLGERV (63 aa).

The protein belongs to the methylthiotransferase family. MiaB subfamily. In terms of assembly, monomer. Requires [4Fe-4S] cluster as cofactor.

Its subcellular location is the cytoplasm. It catalyses the reaction N(6)-dimethylallyladenosine(37) in tRNA + (sulfur carrier)-SH + AH2 + 2 S-adenosyl-L-methionine = 2-methylsulfanyl-N(6)-dimethylallyladenosine(37) in tRNA + (sulfur carrier)-H + 5'-deoxyadenosine + L-methionine + A + S-adenosyl-L-homocysteine + 2 H(+). In terms of biological role, catalyzes the methylthiolation of N6-(dimethylallyl)adenosine (i(6)A), leading to the formation of 2-methylthio-N6-(dimethylallyl)adenosine (ms(2)i(6)A) at position 37 in tRNAs that read codons beginning with uridine. The protein is tRNA-2-methylthio-N(6)-dimethylallyladenosine synthase of Syntrophotalea carbinolica (strain DSM 2380 / NBRC 103641 / GraBd1) (Pelobacter carbinolicus).